A 162-amino-acid chain; its full sequence is uncharacterized protein (162 aa).

This sequence belongs to the M.jannaschii MJ0150/MJ0739/MJ0745/MJ1460/MJ1642 family.

This is an uncharacterized protein from Methanocaldococcus jannaschii (strain ATCC 43067 / DSM 2661 / JAL-1 / JCM 10045 / NBRC 100440) (Methanococcus jannaschii).